Reading from the N-terminus, the 465-residue chain is Ribulose bisphosphate carboxylase large chain (465 aa).

Lys-4 is subject to N6,N6,N6-trimethyllysine. Asn-113 and Thr-163 together coordinate substrate. Lys-165 (proton acceptor) is an active-site residue. Lys-167 provides a ligand contact to substrate. Lys-191, Asp-193, and Glu-194 together coordinate Mg(2+). Lys-191 carries the N6-carboxylysine modification. Residue His-284 is the Proton acceptor of the active site. Substrate-binding residues include Arg-285, His-317, and Ser-369.

The protein belongs to the RuBisCO large chain family. Type I subfamily. In terms of assembly, heterohexadecamer of 8 large chains and 8 small chains; disulfide-linked. The disulfide link is formed within the large subunit homodimers. Mg(2+) serves as cofactor. In terms of processing, the disulfide bond which can form in the large chain dimeric partners within the hexadecamer appears to be associated with oxidative stress and protein turnover.

The protein localises to the plastid. Its subcellular location is the chloroplast. The enzyme catalyses 2 (2R)-3-phosphoglycerate + 2 H(+) = D-ribulose 1,5-bisphosphate + CO2 + H2O. It catalyses the reaction D-ribulose 1,5-bisphosphate + O2 = 2-phosphoglycolate + (2R)-3-phosphoglycerate + 2 H(+). Its function is as follows. RuBisCO catalyzes two reactions: the carboxylation of D-ribulose 1,5-bisphosphate, the primary event in carbon dioxide fixation, as well as the oxidative fragmentation of the pentose substrate in the photorespiration process. Both reactions occur simultaneously and in competition at the same active site. This is Ribulose bisphosphate carboxylase large chain from Ulmus alata (Winged elm).